The sequence spans 335 residues: Phosphate acyltransferase (335 aa).

The protein belongs to the PlsX family. As to quaternary structure, homodimer. Probably interacts with PlsY.

It is found in the cytoplasm. The enzyme catalyses a fatty acyl-[ACP] + phosphate = an acyl phosphate + holo-[ACP]. Its pathway is lipid metabolism; phospholipid metabolism. Catalyzes the reversible formation of acyl-phosphate (acyl-PO(4)) from acyl-[acyl-carrier-protein] (acyl-ACP). This enzyme utilizes acyl-ACP as fatty acyl donor, but not acyl-CoA. The polypeptide is Phosphate acyltransferase (Clostridium botulinum (strain Loch Maree / Type A3)).